The primary structure comprises 376 residues: MSKAVLVLEDGRVFTGRPFGATGQALGEAVFSTGMSGYQETLTDPSYHRQIVVATAPQIGNTGWNGEDSESRGERIWVAGYAVRDPSPRASNWRATGTLEDELIRQRIVGIAGIDTRGVVRHLRSRGSMKAGVFSDGALAEPADLIARVRAQQSMLGADLAGEVSTAEPYVVEPDGPPGVSRFTVAALDLGIKTNTPRNFARRGIRCHVLPASTTFEQIAELNPHGVFLSNGPGDPATADHVVALTREVLGAGIPLFGICFGNQILGRALGLSTYKMVFGHRGINIPVVDHATGRVAVTAQNHGFALQGEAGQSFATPFGPAVVSHTCANDGVVEGVKLVDGRAFSVQYHPEAAAGPHDAEYLFDQFVELMAGEGR.

Residues 1-183 (MSKAVLVLED…PDGPPGVSRF (183 aa)) form a CPSase region. L-glutamine-binding residues include serine 46, glycine 232, and glycine 234. The region spanning 184–376 (TVAALDLGIK…FVELMAGEGR (193 aa)) is the Glutamine amidotransferase type-1 domain. Cysteine 260 acts as the Nucleophile in catalysis. L-glutamine-binding residues include phenylalanine 261, glutamine 264, asparagine 302, glycine 304, and phenylalanine 305. Residues histidine 350 and glutamate 352 contribute to the active site.

It belongs to the CarA family. Composed of two chains; the small (or glutamine) chain promotes the hydrolysis of glutamine to ammonia, which is used by the large (or ammonia) chain to synthesize carbamoyl phosphate. Tetramer of heterodimers (alpha,beta)4.

The catalysed reaction is hydrogencarbonate + L-glutamine + 2 ATP + H2O = carbamoyl phosphate + L-glutamate + 2 ADP + phosphate + 2 H(+). The enzyme catalyses L-glutamine + H2O = L-glutamate + NH4(+). Its pathway is amino-acid biosynthesis; L-arginine biosynthesis; carbamoyl phosphate from bicarbonate: step 1/1. It participates in pyrimidine metabolism; UMP biosynthesis via de novo pathway; (S)-dihydroorotate from bicarbonate: step 1/3. Its function is as follows. Small subunit of the glutamine-dependent carbamoyl phosphate synthetase (CPSase). CPSase catalyzes the formation of carbamoyl phosphate from the ammonia moiety of glutamine, carbonate, and phosphate donated by ATP, constituting the first step of 2 biosynthetic pathways, one leading to arginine and/or urea and the other to pyrimidine nucleotides. The small subunit (glutamine amidotransferase) binds and cleaves glutamine to supply the large subunit with the substrate ammonia. This is Carbamoyl phosphate synthase small chain from Mycobacterium bovis (strain ATCC BAA-935 / AF2122/97).